A 141-amino-acid polypeptide reads, in one-letter code: MAMTVHVDIVSAEEQIFSGLAEFVALPGEAGELGILPGHMPLMTRIKPGAVRVKVQNQAEEEVVFVAGGLLEVQPGLVTVLADTAIRGKDLDEAKALEAKRKAEEALANQSSQLDYAKAQAELAEAIAQIAAIQRLKKGIH.

Belongs to the ATPase epsilon chain family. In terms of assembly, F-type ATPases have 2 components, CF(1) - the catalytic core - and CF(0) - the membrane proton channel. CF(1) has five subunits: alpha(3), beta(3), gamma(1), delta(1), epsilon(1). CF(0) has three main subunits: a, b and c.

It is found in the cell inner membrane. Produces ATP from ADP in the presence of a proton gradient across the membrane. This chain is ATP synthase epsilon chain, found in Azoarcus sp. (strain BH72).